The primary structure comprises 319 residues: Methionyl-tRNA formyltransferase (319 aa).

(6S)-5,6,7,8-tetrahydrofolate is bound at residue 116–119 (SLLP).

Belongs to the Fmt family.

It catalyses the reaction L-methionyl-tRNA(fMet) + (6R)-10-formyltetrahydrofolate = N-formyl-L-methionyl-tRNA(fMet) + (6S)-5,6,7,8-tetrahydrofolate + H(+). In terms of biological role, attaches a formyl group to the free amino group of methionyl-tRNA(fMet). The formyl group appears to play a dual role in the initiator identity of N-formylmethionyl-tRNA by promoting its recognition by IF2 and preventing the misappropriation of this tRNA by the elongation apparatus. This is Methionyl-tRNA formyltransferase from Wigglesworthia glossinidia brevipalpis.